Consider the following 218-residue polypeptide: Ribose-5-phosphate isomerase A (218 aa).

Residues Thr-28–Thr-31, Asp-81–Asp-84, and Lys-94–Gly-97 each bind substrate. Glu-103 serves as the catalytic Proton acceptor. Lys-121 contributes to the substrate binding site.

The protein belongs to the ribose 5-phosphate isomerase family. In terms of assembly, homodimer.

It catalyses the reaction aldehydo-D-ribose 5-phosphate = D-ribulose 5-phosphate. It participates in carbohydrate degradation; pentose phosphate pathway; D-ribose 5-phosphate from D-ribulose 5-phosphate (non-oxidative stage): step 1/1. Functionally, catalyzes the reversible conversion of ribose-5-phosphate to ribulose 5-phosphate. This Vibrio vulnificus (strain CMCP6) protein is Ribose-5-phosphate isomerase A.